The primary structure comprises 203 residues: Ras-like protein family member 10A (203 aa).

Residues 1 to 203 (MGGSLRVAVL…ALHPARCSLM (203 aa)) form a small GTPase-like region. 11-18 (GAPGVGKT) provides a ligand contact to GTP. The short motif at 33–42 (HRPTDSPCLY) is the Effector region element. Residues 59-62 (DGDV) and 129-132 (NKRD) contribute to the GTP site. Cys200 carries the post-translational modification Cysteine methyl ester. A lipid anchor (S-farnesyl cysteine) is attached at Cys200. Residues 201 to 203 (SLM) constitute a propeptide, removed in mature form.

The protein belongs to the small GTPase superfamily. Ras family. Isoprenylation is essential for nucleolar localization, and the proliferation-inhibiting activity of RASL10A.

Its subcellular location is the cell membrane. It is found in the nucleus. The protein resides in the nucleolus. The enzyme catalyses GTP + H2O = GDP + phosphate + H(+). In terms of biological role, potent inhibitor of cellular proliferation. The sequence is that of Ras-like protein family member 10A (Rasl10a) from Mus musculus (Mouse).